We begin with the raw amino-acid sequence, 391 residues long: MMITKQSYQKFALMRVFVFSLSAFIFNTTEFVPVALLSDIAKSFEMESATVGLMITAYAWVVSLGSLPLMLLSAKIERKRLLLFLFALFILSHILSALAWNFWVLLISRMGIAFAHSIFWSITASLVIRVAPRNKKQQALGLLALGSSLAMILGLPLGRIIGQILDWRSTFGVIGGVATLIMLLMWKLLPHLPSRNAGTLASVPVLMKRPLLVGIYLLVIMVISGHFTTYSYIEPFIIQISQFSPDITTLMLFVFGLAGVAGSFLFGRLYAKNSRKFIAFAMVLVICPQLLLFVFKNLEWVIFLQIFLWGIGITSLTIALQMRVLQLAPDATDVASAIFSGSYNVGIGSGALFGSIVIHQLGLEYIGFVGGALGLLALFWLRFITIKFKKT.

A run of 12 helical transmembrane segments spans residues 16–36, 51–71, 82–102, 103–123, 138–158, 170–190, 210–230, 247–267, 277–297, 300–320, 338–358, and 361–381; these read VFVF…PVAL, VGLM…PLML, LLFL…AWNF, WVLL…WSIT, QALG…LPLG, TFGV…KLLP, PLLV…FTTY, ITTL…FLFG, FIAF…VFKN, WVIF…TIAL, IFSG…SIVI, and LGLE…LFWL.

The protein belongs to the major facilitator superfamily. SotB (TC 2.A.1.2) family.

It localises to the cell inner membrane. In terms of biological role, involved in the efflux of sugars. The physiological role may be the reduction of the intracellular concentration of toxic sugars or sugar metabolites. This is Probable sugar efflux transporter from Helicobacter pylori (strain P12).